Consider the following 1338-residue polypeptide: Vascular endothelial growth factor receptor 1 (1338 aa).

Residues 1-26 (MVSYWDTGVLLCALLSCLLLTGSSSG) form the signal peptide. Over 27–758 (SKLKDPELSL…QGTSDKSNLE (732 aa)) the chain is Extracellular. 7 Ig-like C2-type domains span residues 32-123 (PELS…TESA), 151-214 (GREL…VNGH), 230-327 (IDVQ…TSVH), 335-421 (TVKH…LTAT), 428-553 (PQIY…FYIT), 556-654 (PNGF…KEIT), and 661-747 (PYLL…AYLT). 2 disulfides stabilise this stretch: Cys-53/Cys-107 and Cys-158/Cys-207. N-linked (GlcNAc...) asparagine glycans are attached at residues Asn-100, Asn-164, Asn-196, and Asn-251. The cysteines at positions 252 and 311 are disulfide-linked. N-linked (GlcNAc...) asparagine glycans are attached at residues Asn-323, Asn-402, Asn-417, Asn-474, Asn-547, Asn-597, Asn-620, Asn-625, and Asn-666. Residues Cys-454 and Cys-535 are joined by a disulfide bond. The cysteines at positions 577 and 636 are disulfide-linked. The cysteines at positions 682 and 731 are disulfide-linked. Residues 759-780 (LITLTCTCVAATLFWLLLTLFI) traverse the membrane as a helical segment. Residues 781–1338 (RKMKRSSSEI…SVVLYSTPPI (558 aa)) are Cytoplasmic-facing. The Protein kinase domain occupies 827–1158 (LKLGKSLGRG…ELVEKLGDLL (332 aa)). Residues 833-841 (LGRGAFGKV) and Lys-861 contribute to the ATP site. Tyr-914 is modified (phosphotyrosine; by autocatalysis). Basic and acidic residues predominate over residues 940-957 (PKKEKMEPGLEQGKKPRL). Residues 940-982 (PKKEKMEPGLEQGKKPRLDSVTSSESFASSGFQEDKSLSDVEE) form a disordered region. A compositionally biased stretch (polar residues) spans 959 to 971 (SVTSSESFASSGF). The active-site Proton acceptor is the Asp-1022. Residues Tyr-1053, Tyr-1169, Tyr-1213, Tyr-1242, Tyr-1309, Tyr-1327, and Tyr-1333 each carry the phosphotyrosine; by autocatalysis modification.

Belongs to the protein kinase superfamily. Tyr protein kinase family. CSF-1/PDGF receptor subfamily. Interacts with VEGFA, VEGFB and PGF. Monomer in the absence of bound VEGFA, VEGFB or PGF. Homodimer in the presence of bound VEGFA, VEGFB and PGF. Can also form a heterodimer with KDR. Interacts (when tyrosine phosphorylated) with CBL, CRK, GRB2, NCK1, PIK3R1, PLCG, PSEN1 and PTPN11. Probably also interacts with PTPRB. Interacts with RACK1. Identified in a complex with CBL and CD2AP. Post-translationally, N-glycosylated. In terms of processing, ubiquitinated after VEGFA-mediated autophosphorylation, leading to proteolytic degradation. Autophosphorylated on tyrosine residues upon ligand binding. Autophosphorylation occurs in trans, i.e. one subunit of the dimeric receptor phosphorylates tyrosine residues on the other subunit. Phosphorylation at Tyr-1169 is important for interaction with PLCG. Phosphorylation at Tyr-1213 is important for interaction with PIK3R1, PTPN11, GRB2, and PLCG. Phosphorylation at Tyr-1333 is important for endocytosis and for interaction with CBL, NCK1 and CRK. Is probably dephosphorylated by PTPRB. In terms of tissue distribution, detected in normal lung, but also in placenta, liver, kidney, heart and brain tissues. Specifically expressed in most of the vascular endothelial cells, and also expressed in peripheral blood monocytes. Isoform 2 is strongly expressed in placenta. Isoform 3 is expressed in corneal epithelial cells (at protein level). Isoform 3 is expressed in vascular smooth muscle cells (VSMC).

The protein localises to the cell membrane. It is found in the endosome. Its subcellular location is the secreted. It localises to the cytoplasm. The catalysed reaction is L-tyrosyl-[protein] + ATP = O-phospho-L-tyrosyl-[protein] + ADP + H(+). Present in an inactive conformation in the absence of bound ligand. Binding of VEGFA, VEGFB or PGF leads to dimerization and activation by autophosphorylation on tyrosine residues. Tyrosine-protein kinase that acts as a cell-surface receptor for VEGFA, VEGFB and PGF, and plays an essential role in the development of embryonic vasculature, the regulation of angiogenesis, cell survival, cell migration, macrophage function, chemotaxis, and cancer cell invasion. Acts as a positive regulator of postnatal retinal hyaloid vessel regression. May play an essential role as a negative regulator of embryonic angiogenesis by inhibiting excessive proliferation of endothelial cells. Can promote endothelial cell proliferation, survival and angiogenesis in adulthood. Its function in promoting cell proliferation seems to be cell-type specific. Promotes PGF-mediated proliferation of endothelial cells, proliferation of some types of cancer cells, but does not promote proliferation of normal fibroblasts (in vitro). Has very high affinity for VEGFA and relatively low protein kinase activity; may function as a negative regulator of VEGFA signaling by limiting the amount of free VEGFA and preventing its binding to KDR. Modulates KDR signaling by forming heterodimers with KDR. Ligand binding leads to the activation of several signaling cascades. Activation of PLCG leads to the production of the cellular signaling molecules diacylglycerol and inositol 1,4,5-trisphosphate and the activation of protein kinase C. Mediates phosphorylation of PIK3R1, the regulatory subunit of phosphatidylinositol 3-kinase, leading to activation of phosphatidylinositol kinase and the downstream signaling pathway. Mediates activation of MAPK1/ERK2, MAPK3/ERK1 and the MAP kinase signaling pathway, as well as of the AKT1 signaling pathway. Phosphorylates SRC and YES1, and may also phosphorylate CBL. Promotes phosphorylation of AKT1 at 'Ser-473'. Promotes phosphorylation of PTK2/FAK1. Functionally, phosphorylates PLCG. In terms of biological role, may function as decoy receptor for VEGFA. Its function is as follows. Has a truncated kinase domain; it increases phosphorylation of SRC at 'Tyr-418' by unknown means and promotes tumor cell invasion. This Homo sapiens (Human) protein is Vascular endothelial growth factor receptor 1 (FLT1).